The primary structure comprises 383 residues: ATP phosphoribosyltransferase regulatory subunit (383 aa).

The protein belongs to the class-II aminoacyl-tRNA synthetase family. HisZ subfamily. In terms of assembly, heteromultimer composed of HisG and HisZ subunits.

It localises to the cytoplasm. The protein operates within amino-acid biosynthesis; L-histidine biosynthesis; L-histidine from 5-phospho-alpha-D-ribose 1-diphosphate: step 1/9. Its function is as follows. Required for the first step of histidine biosynthesis. May allow the feedback regulation of ATP phosphoribosyltransferase activity by histidine. In Paraburkholderia xenovorans (strain LB400), this protein is ATP phosphoribosyltransferase regulatory subunit.